A 376-amino-acid chain; its full sequence is Zinc transporter 7 (376 aa).

Over 1–37 (MLPLSIKDDEYKPPKFNLFRKISGWFRSILSDKTSRN) the chain is Cytoplasmic. Residues 38 to 58 (LFFFLCLNLSFAFVELLYGIW) form a helical membrane-spanning segment. The Lumenal portion of the chain corresponds to 59–67 (SNCLGLISD). A helical membrane pass occupies residues 68 to 88 (SFHMFFDSTAILAGLAASVIS). Over 89–102 (KWRDNDAFSYGYVR) the chain is Cytoplasmic. The helical transmembrane segment at 103–123 (AEVLAGFVNGLFLIFTAFFIF) threads the bilayer. Topologically, residues 124 to 140 (SEGVERALAPPDVHHER) are lumenal. A helical membrane pass occupies residues 141-161 (LLLVSILGFVVNLVGIFVFKH). Residues 161–218 (HGGHGHSHGSGHGHSHSLFNGALDQTHGHGDHCHSHELKHGAAHSHDHAHGHGHFHSH) form a his-rich loop region. Topologically, residues 162–236 (GGHGHSHGSG…TGPSRQILQG (75 aa)) are cytoplasmic. The span at 188-222 (GHGDHCHSHELKHGAAHSHDHAHGHGHFHSHDGPS) shows a compositional bias: basic and acidic residues. The segment at 188 to 226 (GHGDHCHSHELKHGAAHSHDHAHGHGHFHSHDGPSLKET) is disordered. A helical transmembrane segment spans residues 237–257 (VFLHILADTLGSIGVIASAIM). The Lumenal segment spans residues 258 to 262 (MQNFG). A helical transmembrane segment spans residues 263–283 (LMIADPICSILIAMLIVISVI). Topologically, residues 284–376 (PLLRESVGIL…LYVQIDFAAM (93 aa)) are cytoplasmic.

The protein belongs to the cation diffusion facilitator (CDF) transporter (TC 2.A.4) family. SLC30A subfamily. Homooligomer.

It is found in the golgi apparatus membrane. The protein resides in the cytoplasmic vesicle. The protein localises to the golgi apparatus. Its subcellular location is the trans-Golgi network. It localises to the sarcoplasmic reticulum. It is found in the mitochondrion. The enzyme catalyses Zn(2+)(in) = Zn(2+)(out). Functionally, zinc ion transporter mediating zinc entry from the cytosol into the lumen of organelles along the secretory pathway. By contributing to zinc ion homeostasis within the early secretory pathway, regulates the activation and folding of enzymes like alkaline phosphatases. This is Zinc transporter 7 (SLC30A7) from Bos taurus (Bovine).